Here is a 164-residue protein sequence, read N- to C-terminus: ATP synthase subunit b (164 aa).

A helical transmembrane segment spans residues 8-28 (IGLFFWQTIVFLILLFLMAKF).

It belongs to the ATPase B chain family. In terms of assembly, F-type ATPases have 2 components, F(1) - the catalytic core - and F(0) - the membrane proton channel. F(1) has five subunits: alpha(3), beta(3), gamma(1), delta(1), epsilon(1). F(0) has three main subunits: a(1), b(2) and c(10-14). The alpha and beta chains form an alternating ring which encloses part of the gamma chain. F(1) is attached to F(0) by a central stalk formed by the gamma and epsilon chains, while a peripheral stalk is formed by the delta and b chains.

The protein localises to the cell membrane. In terms of biological role, f(1)F(0) ATP synthase produces ATP from ADP in the presence of a proton or sodium gradient. F-type ATPases consist of two structural domains, F(1) containing the extramembraneous catalytic core and F(0) containing the membrane proton channel, linked together by a central stalk and a peripheral stalk. During catalysis, ATP synthesis in the catalytic domain of F(1) is coupled via a rotary mechanism of the central stalk subunits to proton translocation. Its function is as follows. Component of the F(0) channel, it forms part of the peripheral stalk, linking F(1) to F(0). This Christiangramia forsetii (strain DSM 17595 / CGMCC 1.15422 / KT0803) (Gramella forsetii) protein is ATP synthase subunit b.